Reading from the N-terminus, the 295-residue chain is Ethanolamine ammonia-lyase small subunit (295 aa).

Positions 207, 228, and 258 each coordinate adenosylcob(III)alamin.

It belongs to the EutC family. The basic unit is a heterodimer which dimerizes to form tetramers. The heterotetramers trimerize; 6 large subunits form a core ring with 6 small subunits projecting outwards. Adenosylcob(III)alamin is required as a cofactor.

Its subcellular location is the bacterial microcompartment. It catalyses the reaction ethanolamine = acetaldehyde + NH4(+). The protein operates within amine and polyamine degradation; ethanolamine degradation. Catalyzes the deamination of various vicinal amino-alcohols to oxo compounds. Allows this organism to utilize ethanolamine as the sole source of nitrogen and carbon in the presence of external vitamin B12. The sequence is that of Ethanolamine ammonia-lyase small subunit from Escherichia coli (strain UTI89 / UPEC).